The sequence spans 526 residues: Peptide chain release factor 3 (526 aa).

One can recognise a tr-type G domain in the interval 9-277 (DRRRTFAIVS…TFVDHAPAPL (269 aa)). Residues 18–25 (SHPDAGKT), 86–90 (DTPGH), and 140–143 (NKLD) contribute to the GTP site.

The protein belongs to the TRAFAC class translation factor GTPase superfamily. Classic translation factor GTPase family. PrfC subfamily.

Its subcellular location is the cytoplasm. Its function is as follows. Increases the formation of ribosomal termination complexes and stimulates activities of RF-1 and RF-2. It binds guanine nucleotides and has strong preference for UGA stop codons. It may interact directly with the ribosome. The stimulation of RF-1 and RF-2 is significantly reduced by GTP and GDP, but not by GMP. The polypeptide is Peptide chain release factor 3 (Geobacter sulfurreducens (strain ATCC 51573 / DSM 12127 / PCA)).